We begin with the raw amino-acid sequence, 501 residues long: UDP-N-acetylmuramate--L-alanine ligase (501 aa).

Position 130–136 (130–136) interacts with ATP; sequence GTHGKTS.

This sequence belongs to the MurCDEF family.

The protein resides in the cytoplasm. It carries out the reaction UDP-N-acetyl-alpha-D-muramate + L-alanine + ATP = UDP-N-acetyl-alpha-D-muramoyl-L-alanine + ADP + phosphate + H(+). It functions in the pathway cell wall biogenesis; peptidoglycan biosynthesis. Functionally, cell wall formation. This Nocardia farcinica (strain IFM 10152) protein is UDP-N-acetylmuramate--L-alanine ligase.